The sequence spans 158 residues: Trafficking protein particle complex subunit 6B (158 aa).

It belongs to the TRAPP small subunits family. BET3 subfamily. In terms of assembly, homodimer. Part of a TRAPP complex. Heterodimer with TRAPPC3. The heterodimer TRAPPC6B-TRAPPC3 interacts with TRAPPC1 likely providing a core for TRAPP complex formation.

The protein localises to the golgi apparatus. The protein resides in the cis-Golgi network. Its subcellular location is the endoplasmic reticulum. Component of a transport protein particle (TRAPP) complex that may function in specific stages of inter-organelle traffic. Specifically involved in the early development of neural circuitry, likely by controlling the frequency and amplitude of intracellular calcium transients implicated in the regulation of neuron differentiation and survival. The protein is Trafficking protein particle complex subunit 6B of Bos taurus (Bovine).